Reading from the N-terminus, the 231-residue chain is Phosphatidylserine decarboxylase proenzyme (231 aa).

Ser188 acts as the Schiff-base intermediate with substrate; via pyruvic acid in catalysis. A Pyruvic acid (Ser); by autocatalysis modification is found at Ser188.

This sequence belongs to the phosphatidylserine decarboxylase family. PSD-A subfamily. As to quaternary structure, heterodimer of a large membrane-associated beta subunit and a small pyruvoyl-containing alpha subunit. Pyruvate serves as cofactor. In terms of processing, is synthesized initially as an inactive proenzyme. Formation of the active enzyme involves a self-maturation process in which the active site pyruvoyl group is generated from an internal serine residue via an autocatalytic post-translational modification. Two non-identical subunits are generated from the proenzyme in this reaction, and the pyruvate is formed at the N-terminus of the alpha chain, which is derived from the carboxyl end of the proenzyme. The post-translation cleavage follows an unusual pathway, termed non-hydrolytic serinolysis, in which the side chain hydroxyl group of the serine supplies its oxygen atom to form the C-terminus of the beta chain, while the remainder of the serine residue undergoes an oxidative deamination to produce ammonia and the pyruvoyl prosthetic group on the alpha chain.

The protein localises to the cell membrane. The enzyme catalyses a 1,2-diacyl-sn-glycero-3-phospho-L-serine + H(+) = a 1,2-diacyl-sn-glycero-3-phosphoethanolamine + CO2. The protein operates within phospholipid metabolism; phosphatidylethanolamine biosynthesis; phosphatidylethanolamine from CDP-diacylglycerol: step 2/2. In terms of biological role, catalyzes the formation of phosphatidylethanolamine (PtdEtn) from phosphatidylserine (PtdSer). This Rickettsia rickettsii (strain Iowa) protein is Phosphatidylserine decarboxylase proenzyme.